The primary structure comprises 636 residues: p-hydroxybenzoate-m-hydroxylase (636 aa).

FAD is bound by residues 11–40, 242–244, tyrosine 290, and aspartate 311; these read DIVI…HIDN and RLY. A helical membrane pass occupies residues 12–33; sequence IVIVGAGPVGILLSLCMSRWGY. The N-linked (GlcNAc...) asparagine glycan is linked to asparagine 573.

It belongs to the PheA/TfdB FAD monooxygenase family. FAD serves as cofactor.

It localises to the membrane. The catalysed reaction is 4-hydroxybenzoate + NADH + O2 + H(+) = 3,4-dihydroxybenzoate + NAD(+) + H2O. The enzyme catalyses 4-hydroxybenzoate + NADPH + O2 + H(+) = 3,4-dihydroxybenzoate + NADP(+) + H2O. Functionally, FAD-dependent monooxygenase; part of the benzoic acid degradation pathway also known as the protocatechuic acid pathway. Benzoic acid debradation begins with the conversion of benzoic acid into 4-hydroxybenzoic acid through hydroxylation by the benzoate-4-monooxygenase bphA, and its partner NADPH-cytochrome P450 reductase cprA which act as a mediator in electron donation from NADPH. 4-Hydroxybenzoic acid is then converted into 3,4-dihydroxybenzoic acid (also called protocatechuic acid) by the p-hydroxybenzoate-m-hydroxylase phhA. Protocatechuic acid is converted into 3-carboxy-cis,cis-muconic acid by the intradiol ring-cleavage dioxygenase prcA, which is further metabolized through the 3-oxoadipate pathway to finally enter the tricarboxylic acid cycle (TCA). This Emericella nidulans (strain FGSC A4 / ATCC 38163 / CBS 112.46 / NRRL 194 / M139) (Aspergillus nidulans) protein is p-hydroxybenzoate-m-hydroxylase.